Consider the following 214-residue polypeptide: NADH-quinone oxidoreductase subunit C (214 aa).

The protein belongs to the complex I 30 kDa subunit family. NDH-1 is composed of 14 different subunits. Subunits NuoB, C, D, E, F, and G constitute the peripheral sector of the complex.

It localises to the cell inner membrane. The enzyme catalyses a quinone + NADH + 5 H(+)(in) = a quinol + NAD(+) + 4 H(+)(out). In terms of biological role, NDH-1 shuttles electrons from NADH, via FMN and iron-sulfur (Fe-S) centers, to quinones in the respiratory chain. The immediate electron acceptor for the enzyme in this species is believed to be ubiquinone. Couples the redox reaction to proton translocation (for every two electrons transferred, four hydrogen ions are translocated across the cytoplasmic membrane), and thus conserves the redox energy in a proton gradient. This chain is NADH-quinone oxidoreductase subunit C, found in Caulobacter sp. (strain K31).